Consider the following 112-residue polypeptide: Cell cycle protein GpsB (112 aa).

A coiled-coil region spans residues Y42 to R77. The interval A74 to V96 is disordered. Positions N81 to N95 are enriched in low complexity.

The protein belongs to the GpsB family. In terms of assembly, forms polymers through the coiled coil domains. Interacts with PBP1, MreC and EzrA.

The protein localises to the cytoplasm. Its function is as follows. Divisome component that associates with the complex late in its assembly, after the Z-ring is formed, and is dependent on DivIC and PBP2B for its recruitment to the divisome. Together with EzrA, is a key component of the system that regulates PBP1 localization during cell cycle progression. Its main role could be the removal of PBP1 from the cell pole after pole maturation is completed. Also contributes to the recruitment of PBP1 to the division complex. Not essential for septum formation. This chain is Cell cycle protein GpsB, found in Staphylococcus epidermidis (strain ATCC 12228 / FDA PCI 1200).